Consider the following 124-residue polypeptide: Small ribosomal subunit protein uS12 (124 aa).

The residue at position 89 (Asp89) is a 3-methylthioaspartic acid.

Belongs to the universal ribosomal protein uS12 family. Part of the 30S ribosomal subunit. Contacts proteins S8 and S17. May interact with IF1 in the 30S initiation complex.

Functionally, with S4 and S5 plays an important role in translational accuracy. Interacts with and stabilizes bases of the 16S rRNA that are involved in tRNA selection in the A site and with the mRNA backbone. Located at the interface of the 30S and 50S subunits, it traverses the body of the 30S subunit contacting proteins on the other side and probably holding the rRNA structure together. The combined cluster of proteins S8, S12 and S17 appears to hold together the shoulder and platform of the 30S subunit. The sequence is that of Small ribosomal subunit protein uS12 from Edwardsiella ictaluri (strain 93-146).